Here is a 368-residue protein sequence, read N- to C-terminus: Proteinase-activated receptor 3 (368 aa).

The signal sequence occupies residues 1–21; it reads MEMKVLILVGVRLLFLPTTVC. Positions 22–37 are cleaved as a propeptide — removed for receptor activation; sequence QSGMKHVSDNSALTAE. Over 38-93 the chain is Extracellular; sequence SFNGNEHSFEEFPLSDIEGWTGATTTIKAKCPEESITTLHVNNATMGYLRSSLSTK. N-linked (GlcNAc...) asparagine glycosylation occurs at N80. A helical membrane pass occupies residues 94–114; that stretch reads VIPAIYILVFVIGVPANIVTL. Residues 115-123 lie on the Cytoplasmic side of the membrane; that stretch reads WKLSSRTKS. The chain crosses the membrane as a helical span at residues 124–144; that stretch reads ICLVIFHTNLAIADLLFCVTL. Over 145-166 the chain is Extracellular; that stretch reads PFKIAYHLNGNDWVFGEVMCRV. C164 and C243 form a disulfide bridge. The chain crosses the membrane as a helical span at residues 167–187; it reads TTVAFYGNMYCAILILTCMGI. Residues 188–208 are Cytoplasmic-facing; it reads NRYLATVHPFTYRKLPKRNFT. The helical transmembrane segment at 209–229 threads the bilayer; that stretch reads LLMCGVVWVMVVLYMLPLAIL. Residues 230–257 are Extracellular-facing; that stretch reads KQEYHLVQPGITTCHDVHDTCESPLPFQ. The helical transmembrane segment at 258–278 threads the bilayer; that stretch reads FYYFVSLAFFGFLIPFVVSVF. At 279–300 the chain is on the cytoplasmic side; it reads CYTTLIHKLNAQDRKWLRYIKA. The helical transmembrane segment at 301 to 321 threads the bilayer; the sequence is VLLILVIFTICFAPTNIILII. Over 322–338 the chain is Extracellular; that stretch reads HHANYYYSNTDSLYFMY. The chain crosses the membrane as a helical span at residues 339–359; sequence LIALCLGSLNSCLDPFLYFIM. Topologically, residues 360 to 368 are cytoplasmic; that stretch reads SKIVDQLTS.

It belongs to the G-protein coupled receptor 1 family. Interacts with INSC/inscuteable and GPSM2. Post-translationally, a proteolytic cleavage generates a new N-terminus that functions as a tethered ligand.

It is found in the cell membrane. Receptor for activated thrombin coupled to G proteins that stimulate phosphoinositide hydrolysis. The polypeptide is Proteinase-activated receptor 3 (F2rl2) (Rattus norvegicus (Rat)).